The following is a 330-amino-acid chain: 7,8-didemethyl-8-hydroxy-5-deazariboflavin synthase (330 aa).

One can recognise a Radical SAM core domain in the interval 5–245 (VTFSRNVFIP…SDVAVQVAPN (241 aa)). The [4Fe-4S] cluster site is built by Cys19, Cys23, and Cys26.

This sequence belongs to the radical SAM superfamily. CofG family. Consists of two subunits, CofG and CofH. The cofactor is [4Fe-4S] cluster.

The enzyme catalyses 5-amino-5-(4-hydroxybenzyl)-6-(D-ribitylimino)-5,6-dihydrouracil + S-adenosyl-L-methionine = 7,8-didemethyl-8-hydroxy-5-deazariboflavin + 5'-deoxyadenosine + L-methionine + NH4(+) + H(+). Its pathway is cofactor biosynthesis; coenzyme F0 biosynthesis. Its function is as follows. Catalyzes the radical-mediated synthesis of 7,8-didemethyl-8-hydroxy-5-deazariboflavin from 5-amino-5-(4-hydroxybenzyl)-6-(D-ribitylimino)-5,6-dihydrouracil. This chain is 7,8-didemethyl-8-hydroxy-5-deazariboflavin synthase, found in Methanococcoides burtonii (strain DSM 6242 / NBRC 107633 / OCM 468 / ACE-M).